Consider the following 603-residue polypeptide: Elongation factor 4 (603 aa).

The region spanning 7-189 (SRIRNFSIIA…SIVHLVPPPQ (183 aa)) is the tr-type G domain. GTP-binding positions include 19–24 (DHGKST) and 136–139 (NKID).

Belongs to the TRAFAC class translation factor GTPase superfamily. Classic translation factor GTPase family. LepA subfamily.

The protein resides in the cell inner membrane. The catalysed reaction is GTP + H2O = GDP + phosphate + H(+). Functionally, required for accurate and efficient protein synthesis under certain stress conditions. May act as a fidelity factor of the translation reaction, by catalyzing a one-codon backward translocation of tRNAs on improperly translocated ribosomes. Back-translocation proceeds from a post-translocation (POST) complex to a pre-translocation (PRE) complex, thus giving elongation factor G a second chance to translocate the tRNAs correctly. Binds to ribosomes in a GTP-dependent manner. This Cyanothece sp. (strain PCC 7425 / ATCC 29141) protein is Elongation factor 4.